A 353-amino-acid polypeptide reads, in one-letter code: Protein-arginine kinase (353 aa).

The 233-residue stretch at 24–256 (IVLSSRIRLA…RTVIDTEEQA (233 aa)) folds into the Phosphagen kinase C-terminal domain. Residues 27 to 31 (SSRIR), His93, Arg127, 178 to 182 (RASVM), and 209 to 214 (RGLYGE) each bind ATP. The RDXXRA motif of the pArg binding pocket involved in allosteric regulation motif lies at 339 to 344 (RDVRRA).

It belongs to the ATP:guanido phosphotransferase family.

It carries out the reaction L-arginyl-[protein] + ATP = N(omega)-phospho-L-arginyl-[protein] + ADP + H(+). Appears to be allosterically activated by the binding of pArg-containing polypeptides to the pArg-binding pocket localized in the C-terminal domain of McsB. Its function is as follows. Catalyzes the specific phosphorylation of arginine residues in proteins. The protein is Protein-arginine kinase of Symbiobacterium thermophilum (strain DSM 24528 / JCM 14929 / IAM 14863 / T).